The following is a 175-amino-acid chain: Nucleoside triphosphate/diphosphate phosphatase (175 aa).

The active-site Proton donor is the Arg23. The Mg(2+) site is built by Asn87, Asp103, Asp105, Asp107, Asp120, and Glu123.

Belongs to the Ntdp family. Mg(2+) is required as a cofactor.

It carries out the reaction a ribonucleoside 5'-triphosphate + H2O = a ribonucleoside 5'-diphosphate + phosphate + H(+). The enzyme catalyses a ribonucleoside 5'-diphosphate + H2O = a ribonucleoside 5'-phosphate + phosphate + H(+). Has nucleoside phosphatase activity towards nucleoside triphosphates and nucleoside diphosphates. The sequence is that of Nucleoside triphosphate/diphosphate phosphatase from Oceanobacillus iheyensis (strain DSM 14371 / CIP 107618 / JCM 11309 / KCTC 3954 / HTE831).